Consider the following 468-residue polypeptide: Probable xyloglucan galactosyltransferase GT13 (468 aa).

Topologically, residues 1 to 18 are cytoplasmic; sequence MDKFNPKKEKTVKKRALK. A helical; Signal-anchor for type II membrane protein transmembrane segment spans residues 19–35; that stretch reads VLTEISPTPLFSMLFLL. Residues 36–468 lie on the Lumenal side of the membrane; the sequence is HISQIATYLS…RVSLFKMTRI (433 aa). N-linked (GlcNAc...) asparagine glycosylation is found at asparagine 53, asparagine 116, asparagine 153, asparagine 240, and asparagine 412.

This sequence belongs to the glycosyltransferase 47 family. Expressed in roots, hypocotyls, cotyledons, leaves, stems, petals and carpels.

The protein localises to the golgi apparatus membrane. In terms of biological role, functions in xyloglucan synthesis by adding side chains to the xylosylated glucan backbone. Involved in the galactosylation of hemicellulose xyloglucan. This Arabidopsis thaliana (Mouse-ear cress) protein is Probable xyloglucan galactosyltransferase GT13.